A 279-amino-acid polypeptide reads, in one-letter code: Acetylglutamate kinase (279 aa).

Substrate contacts are provided by residues 64–65, R86, and N177; that span reads GG.

The protein belongs to the acetylglutamate kinase family. ArgB subfamily.

It is found in the cytoplasm. It catalyses the reaction N-acetyl-L-glutamate + ATP = N-acetyl-L-glutamyl 5-phosphate + ADP. It participates in amino-acid biosynthesis; L-arginine biosynthesis; N(2)-acetyl-L-ornithine from L-glutamate: step 2/4. In terms of biological role, catalyzes the ATP-dependent phosphorylation of N-acetyl-L-glutamate. This chain is Acetylglutamate kinase, found in Campylobacter jejuni (strain RM1221).